We begin with the raw amino-acid sequence, 513 residues long: ATP synthase subunit alpha (513 aa).

169 to 176 (GDRQTGKT) contributes to the ATP binding site.

This sequence belongs to the ATPase alpha/beta chains family. F-type ATPases have 2 components, CF(1) - the catalytic core - and CF(0) - the membrane proton channel. CF(1) has five subunits: alpha(3), beta(3), gamma(1), delta(1), epsilon(1). CF(0) has three main subunits: a(1), b(2) and c(9-12). The alpha and beta chains form an alternating ring which encloses part of the gamma chain. CF(1) is attached to CF(0) by a central stalk formed by the gamma and epsilon chains, while a peripheral stalk is formed by the delta and b chains.

The protein resides in the cell inner membrane. It catalyses the reaction ATP + H2O + 4 H(+)(in) = ADP + phosphate + 5 H(+)(out). In terms of biological role, produces ATP from ADP in the presence of a proton gradient across the membrane. The alpha chain is a regulatory subunit. The chain is ATP synthase subunit alpha from Salmonella agona (strain SL483).